Consider the following 325-residue polypeptide: Peroxidase 45 (325 aa).

A signal peptide spans 1–25; that stretch reads MEKNTSQTIFSNFFLLLLLSSCVSA. Disulfide bonds link Cys-36/Cys-115, Cys-69/Cys-74, Cys-121/Cys-321, and Cys-200/Cys-232. His-67 acts as the Proton acceptor in catalysis. Ca(2+) is bound by residues Asp-68, Val-71, Gly-73, Asp-75, and Ser-77. Pro-163 contacts substrate. Position 193 (His-193) interacts with heme b. Thr-194 is a binding site for Ca(2+). 3 residues coordinate Ca(2+): Asp-245, Ser-248, and Asp-253.

This sequence belongs to the peroxidase family. Classical plant (class III) peroxidase subfamily. Requires heme b as cofactor. The cofactor is Ca(2+). In terms of tissue distribution, slightly expressed in roots.

It is found in the secreted. The enzyme catalyses 2 a phenolic donor + H2O2 = 2 a phenolic radical donor + 2 H2O. Its function is as follows. Removal of H(2)O(2), oxidation of toxic reductants, biosynthesis and degradation of lignin, suberization, auxin catabolism, response to environmental stresses such as wounding, pathogen attack and oxidative stress. These functions might be dependent on each isozyme/isoform in each plant tissue. This is Peroxidase 45 (PER45) from Arabidopsis thaliana (Mouse-ear cress).